A 385-amino-acid polypeptide reads, in one-letter code: Glucans biosynthesis protein C (385 aa).

10 consecutive transmembrane segments (helical) span residues alanine 17 to tryptophan 37, methionine 60 to leucine 80, valine 91 to glutamine 111, isoleucine 137 to phenylalanine 157, lysine 173 to isoleucine 193, phenylalanine 212 to isoleucine 232, leucine 239 to leucine 259, threonine 274 to glycine 294, alanine 311 to threonine 331, and tryptophan 338 to isoleucine 358.

Belongs to the acyltransferase 3 family. OpgC subfamily.

It localises to the cell membrane. The protein operates within glycan metabolism; osmoregulated periplasmic glucan (OPG) biosynthesis. Necessary for the succinyl substitution of periplasmic glucans. Could catalyze the transfer of succinyl residues from the cytoplasmic side of the membrane to the nascent glucan backbones on the periplasmic side of the membrane. The protein is Glucans biosynthesis protein C of Escherichia coli O6:K15:H31 (strain 536 / UPEC).